A 266-amino-acid polypeptide reads, in one-letter code: Large ribosomal subunit protein eL8 (266 aa).

Residues lysine 11, lysine 20, and lysine 21 each participate in a glycyl lysine isopeptide (Lys-Gly) (interchain with G-Cter in SUMO2) cross-link. Residue lysine 34 is modified to N6-acetyllysine. A Glycyl lysine isopeptide (Lys-Gly) (interchain with G-Cter in SUMO2) cross-link involves residue lysine 48. Position 97 is an N6-acetyllysine; alternate (lysine 97). Residue lysine 97 forms a Glycyl lysine isopeptide (Lys-Gly) (interchain with G-Cter in SUMO2); alternate linkage. A Glycyl lysine isopeptide (Lys-Gly) (interchain with G-Cter in SUMO2) cross-link involves residue lysine 125. At lysine 217 the chain carries N6-acetyllysine. Lysine 245 participates in a covalent cross-link: Glycyl lysine isopeptide (Lys-Gly) (interchain with G-Cter in SUMO2).

It belongs to the eukaryotic ribosomal protein eL8 family. In terms of assembly, component of the large ribosomal subunit. Interacts with CRY1. Interacts with DICER1, AGO2, TARBP2, MOV10 and EIF6; they form a large RNA-induced silencing complex (RISC).

Its subcellular location is the cytoplasm. Functionally, component of the large ribosomal subunit. The ribosome is a large ribonucleoprotein complex responsible for the synthesis of proteins in the cell. This Mus musculus (Mouse) protein is Large ribosomal subunit protein eL8 (Rpl7a).